Reading from the N-terminus, the 794-residue chain is Transcription factor TOG1 (794 aa).

Residues Cys18, Cys21, Cys28, Cys34, Cys37, and Cys44 each coordinate Zn(2+). Residues 18-44 (CDRCHRKKIKCNSKKPCFGCIGSQSKC) constitute a DNA-binding region (zn(2)-C6 fungal-type).

The protein localises to the nucleus. Transcriptional activator required for growth on non-fermentable carbon sources and that regulates genes involved in fatty acid utilization. Acts as a direct activator that binds the promoters of oleate utilizing genes, encoded key enzymes in beta-oxidation and NADPH regeneration (POX1, FOX2,POT1 and IDP2), the glyoxylate shunt (MLS1 and ICL1), and gluconeogenesis (PCK1 and FBP1). Also regulates the abundance of peroxisomes that are vital for fatty acid oxidation. The sequence is that of Transcription factor TOG1 from Saccharomyces cerevisiae (strain ATCC 204508 / S288c) (Baker's yeast).